The chain runs to 330 residues: MCSSIPSLREVFANDFRIGAAVNPVTLEAQQSLLIRHVNSLTAENHMKFEHLQPEEGRFTFDIAIKSSTSPFSSHGVRGHTLVWHNQTPSWVFQDSQGHFVGRDVLLERMKSHISTVVQRYKGKVYCWDVINEAVADEGSEWLRSSTWRQIIGDDFIQQAFLYAHEADPEALLFYNDYNECFPEKREKIYTLVKSLRDKGIPIHGIGMQAHWSLNRPTLDEIRAAIERYASLGVILHITELDISMFEFDDHRKDLAAPTNEMVERQAERYEQIFSLFKEYRDVIQNVTFWGIADDHTWLDHFPVQGRKNWPLLFDEQHNPKPAFWRVVNI.

In terms of domain architecture, GH10 spans 2-330; the sequence is CSSIPSLREV…KPAFWRVVNI (329 aa). Glutamate 133 (proton donor) is an active-site residue. Glutamate 240 acts as the Nucleophile in catalysis.

The protein belongs to the glycosyl hydrolase 10 (cellulase F) family. Cytoplasmic xylanase subfamily.

It is found in the cytoplasm. It catalyses the reaction Endohydrolysis of (1-&gt;4)-beta-D-xylosidic linkages in xylans.. Its pathway is glycan degradation; xylan degradation. The sequence is that of Endo-1,4-beta-xylanase (xynA) from Geobacillus stearothermophilus (Bacillus stearothermophilus).